The sequence spans 764 residues: Phenylalanine--tRNA ligase beta subunit (764 aa).

Residues 38-148 (CIAPKNVVVG…GELVLGKELN (111 aa)) enclose the tRNA-binding domain. Positions 375 to 455 (LKDRTLTFQL…RFVGIDNLVS (81 aa)) constitute a B5 domain. Mg(2+) contacts are provided by D433, D439, E442, and E443. The FDX-ACB domain occupies 673–763 (SIYPSSVRDL…LEKEFNARLK (91 aa)).

It belongs to the phenylalanyl-tRNA synthetase beta subunit family. Type 1 subfamily. Tetramer of two alpha and two beta subunits. Mg(2+) is required as a cofactor.

It is found in the cytoplasm. It carries out the reaction tRNA(Phe) + L-phenylalanine + ATP = L-phenylalanyl-tRNA(Phe) + AMP + diphosphate + H(+). The chain is Phenylalanine--tRNA ligase beta subunit (pheT) from Helicobacter pylori (strain ATCC 700392 / 26695) (Campylobacter pylori).